Consider the following 255-residue polypeptide: Probable pyridoxal 5'-phosphate synthase subunit PDX2 (255 aa).

An L-glutamine-binding site is contributed by 46–48 (GES). Residue C78 is the Nucleophile of the active site. L-glutamine contacts are provided by residues R108 and 142 to 143 (IR). Residues H202 and E204 each act as charge relay system in the active site. The disordered stretch occupies residues 225–255 (GASSSSSKTIVSVGETSAGPEPAKPDLPIFQ).

Belongs to the glutaminase PdxT/SNO family. Interacts with PDX1.1 or PDX1.3, but not with PDX1.2. Binds to RPA2A. In terms of tissue distribution, strongly expressed in roots, stems, leaves and flowers.

The protein resides in the cytoplasm. The catalysed reaction is aldehydo-D-ribose 5-phosphate + D-glyceraldehyde 3-phosphate + L-glutamine = pyridoxal 5'-phosphate + L-glutamate + phosphate + 3 H2O + H(+). It carries out the reaction L-glutamine + H2O = L-glutamate + NH4(+). Its pathway is cofactor biosynthesis; pyridoxal 5'-phosphate biosynthesis. Functionally, catalyzes the hydrolysis of glutamine to glutamate and ammonia as part of the biosynthesis of pyridoxal 5'-phosphate. The resulting ammonia molecule is channeled to the active site of PDX1. Involved in the indirect resistance to singlet oxygen-generating photosensitizers. The protein is Probable pyridoxal 5'-phosphate synthase subunit PDX2 (PDX2) of Arabidopsis thaliana (Mouse-ear cress).